The sequence spans 242 residues: Alpha-aspartyl dipeptidase (242 aa).

Catalysis depends on charge relay system residues Ser-125, Asp-140, and His-162.

This sequence belongs to the peptidase S51 family.

Its subcellular location is the cytoplasm. The enzyme catalyses Dipeptidase E catalyzes the hydrolysis of dipeptides Asp-|-Xaa. It does not act on peptides with N-terminal Glu, Asn or Gln, nor does it cleave isoaspartyl peptides.. Its function is as follows. Hydrolyzes dipeptides containing N-terminal aspartate residues. The chain is Alpha-aspartyl dipeptidase (aad-a) from Xenopus laevis (African clawed frog).